Here is a 123-residue protein sequence, read N- to C-terminus: MEYEFLLDVTGLVTSRFSMDHEAIGQWLNEEVKGDLAVIDKIASALAEIKGSERQWQLVGHEYTLLMDDEEVMVRANQLEFETDSMEEGMSYYDKESLAFCGTKDFIDMLADYRDFILQKYDW.

The protein belongs to the UPF0231 family.

The polypeptide is UPF0231 protein plu3616 (Photorhabdus laumondii subsp. laumondii (strain DSM 15139 / CIP 105565 / TT01) (Photorhabdus luminescens subsp. laumondii)).